The chain runs to 237 residues: Phosphoadenosine 5'-phosphosulfate reductase (237 aa).

Cys231 serves as the catalytic Nucleophile; cysteine thiosulfonate intermediate.

It belongs to the PAPS reductase family. CysH subfamily.

The protein localises to the cytoplasm. The enzyme catalyses [thioredoxin]-disulfide + sulfite + adenosine 3',5'-bisphosphate + 2 H(+) = [thioredoxin]-dithiol + 3'-phosphoadenylyl sulfate. It participates in sulfur metabolism; hydrogen sulfide biosynthesis; sulfite from sulfate: step 3/3. Its function is as follows. Catalyzes the formation of sulfite from phosphoadenosine 5'-phosphosulfate (PAPS) using thioredoxin as an electron donor. The sequence is that of Phosphoadenosine 5'-phosphosulfate reductase from Xylella fastidiosa (strain M12).